Reading from the N-terminus, the 413-residue chain is Glutamyl-tRNA reductase (413 aa).

Substrate contacts are provided by residues 57–60 (TCNR), S113, 118–120 (DFE), and Q124. C58 (nucleophile) is an active-site residue. Position 193–198 (193–198 (GTGKIG)) interacts with NADP(+).

It belongs to the glutamyl-tRNA reductase family. Homodimer.

It carries out the reaction (S)-4-amino-5-oxopentanoate + tRNA(Glu) + NADP(+) = L-glutamyl-tRNA(Glu) + NADPH + H(+). It functions in the pathway porphyrin-containing compound metabolism; protoporphyrin-IX biosynthesis; 5-aminolevulinate from L-glutamyl-tRNA(Glu): step 1/2. Its function is as follows. Catalyzes the NADPH-dependent reduction of glutamyl-tRNA(Glu) to glutamate 1-semialdehyde (GSA). The sequence is that of Glutamyl-tRNA reductase from Flavobacterium psychrophilum (strain ATCC 49511 / DSM 21280 / CIP 103535 / JIP02/86).